A 190-amino-acid polypeptide reads, in one-letter code: MFHQVWAALLSLYGLLFNSMNQCPEHSQLTALGMDDTETPEPHLGLWYFIAGAASTTEELATFDPVDNIVFNMAAGSAPRQLQLRATIRTKSGVCVPRKWTYRLTEGKGNMELRTEGRPDMKTDLFSSSCPGGIMLKETGQGYQRFLLYNRSPHPPEKCVEEFQSLTSCLDFKAFLVTPRNQEACPLSSK.

Positions 1–22 (MFHQVWAALLSLYGLLFNSMNQ) form a signal peptide, not cleaved. 3 cysteine pairs are disulfide-bonded: cysteine 23-cysteine 169, cysteine 95-cysteine 185, and cysteine 130-cysteine 159. Glutamate 138 and arginine 145 together coordinate tetradecanoate.

This sequence belongs to the calycin superfamily. Lipocalin family. Highly divergent. As to quaternary structure, interacts with LRP2; LRP2 mediates APOM renal uptake and subsequent lysosomal degradation. As to expression, expressed by the liver; secreted in plasma.

The protein resides in the secreted. Its function is as follows. Probably involved in lipid transport. Can bind sphingosine-1-phosphate, myristic acid, palmitic acid and stearic acid, retinol, all-trans-retinoic acid and 9-cis-retinoic acid. The polypeptide is Apolipoprotein M (Apom) (Mus musculus (Mouse)).